The primary structure comprises 438 residues: Trigger factor (438 aa).

The PPIase FKBP-type domain maps to 160–245 (DDKVVIDFVG…VKKIQEAQLP (86 aa)).

Belongs to the FKBP-type PPIase family. Tig subfamily.

The protein localises to the cytoplasm. It catalyses the reaction [protein]-peptidylproline (omega=180) = [protein]-peptidylproline (omega=0). Involved in protein export. Acts as a chaperone by maintaining the newly synthesized protein in an open conformation. Functions as a peptidyl-prolyl cis-trans isomerase. The sequence is that of Trigger factor from Francisella philomiragia subsp. philomiragia (strain ATCC 25017 / CCUG 19701 / FSC 153 / O#319-036).